Consider the following 136-residue polypeptide: Ribosome-binding factor A (136 aa).

Belongs to the RbfA family. As to quaternary structure, monomer. Binds 30S ribosomal subunits, but not 50S ribosomal subunits or 70S ribosomes.

It localises to the cytoplasm. One of several proteins that assist in the late maturation steps of the functional core of the 30S ribosomal subunit. Associates with free 30S ribosomal subunits (but not with 30S subunits that are part of 70S ribosomes or polysomes). Required for efficient processing of 16S rRNA. May interact with the 5'-terminal helix region of 16S rRNA. The sequence is that of Ribosome-binding factor A from Serratia proteamaculans (strain 568).